Here is a 507-residue protein sequence, read N- to C-terminus: Ribosomal protein uS12 methylthiotransferase RimO (507 aa).

The MTTase N-terminal domain maps to Arg13–Ala124. [4Fe-4S] cluster contacts are provided by Cys22, Cys58, and Cys87. A disordered region spans residues Ala150–Val175. A compositionally biased stretch (low complexity) spans Pro155–Pro172. Positions Leu191–Arg422 constitute a Radical SAM core domain. Residues Cys205, Cys209, and Cys212 each contribute to the [4Fe-4S] cluster site. In terms of domain architecture, TRAM spans Glu424–Gly497.

Belongs to the methylthiotransferase family. RimO subfamily. [4Fe-4S] cluster is required as a cofactor.

Its subcellular location is the cytoplasm. The catalysed reaction is L-aspartate(89)-[ribosomal protein uS12]-hydrogen + (sulfur carrier)-SH + AH2 + 2 S-adenosyl-L-methionine = 3-methylsulfanyl-L-aspartate(89)-[ribosomal protein uS12]-hydrogen + (sulfur carrier)-H + 5'-deoxyadenosine + L-methionine + A + S-adenosyl-L-homocysteine + 2 H(+). In terms of biological role, catalyzes the methylthiolation of an aspartic acid residue of ribosomal protein uS12. The protein is Ribosomal protein uS12 methylthiotransferase RimO of Salinispora arenicola (strain CNS-205).